Consider the following 151-residue polypeptide: UPF0179 protein MJ1627 (151 aa).

The protein belongs to the UPF0179 family.

This chain is UPF0179 protein MJ1627, found in Methanocaldococcus jannaschii (strain ATCC 43067 / DSM 2661 / JAL-1 / JCM 10045 / NBRC 100440) (Methanococcus jannaschii).